The chain runs to 451 residues: UPF0210 protein CA_C0479 (451 aa).

It belongs to the UPF0210 family. As to quaternary structure, homodimer.

The sequence is that of UPF0210 protein CA_C0479 from Clostridium acetobutylicum (strain ATCC 824 / DSM 792 / JCM 1419 / IAM 19013 / LMG 5710 / NBRC 13948 / NRRL B-527 / VKM B-1787 / 2291 / W).